The following is a 319-amino-acid chain: Ribosomal protein uL3 glutamine methyltransferase (319 aa).

It belongs to the protein N5-glutamine methyltransferase family. PrmB subfamily.

The enzyme catalyses L-glutaminyl-[ribosomal protein uL3] + S-adenosyl-L-methionine = N(5)-methyl-L-glutaminyl-[ribosomal protein uL3] + S-adenosyl-L-homocysteine + H(+). In terms of biological role, methylates large ribosomal subunit protein uL3 on a specific glutamine residue. The chain is Ribosomal protein uL3 glutamine methyltransferase from Bradyrhizobium diazoefficiens (strain JCM 10833 / BCRC 13528 / IAM 13628 / NBRC 14792 / USDA 110).